We begin with the raw amino-acid sequence, 337 residues long: Protein hairy (337 aa).

The interaction with Topors stretch occupies residues 29-48 (KSDRRSNKPIMEKRRRARIN). The bHLH domain occupies 31–88 (DRRSNKPIMEKRRRARINNCLNELKTLILDATKKDPARHSKLEKADILEKTVKHLQEL). An Orange domain is found at 107–136 (FKAGFADCVNEVSRFPGIEPAQRRRLLQHL). 2 disordered regions span residues 146–178 (ELHQ…SQQG) and 259–311 (MPQR…VIQR). Residues 263–301 (TASTGSASSHSSAGYESAPGSSSSCSYAPPSPANSSYEP) show a composition bias toward low complexity. A WRPW motif motif is present at residues 334 to 337 (WRPW).

In terms of assembly, transcription repression requires formation of a complex with a corepressor protein (Groucho). Interacts with gro (via WPRW motif) and Topors. Post-translationally, ubiquitinated by Topors.

It localises to the nucleus. Pair-rule protein that regulates embryonic segmentation and adult bristle patterning. Transcriptional repressor of genes that require a bHLH protein for their transcription (e.g. ftz). In Drosophila melanogaster (Fruit fly), this protein is Protein hairy.